We begin with the raw amino-acid sequence, 122 residues long: Large ribosomal subunit protein uL14c (122 aa).

The protein belongs to the universal ribosomal protein uL14 family. Part of the 50S ribosomal subunit.

It is found in the plastid. It localises to the chloroplast. In terms of biological role, binds to 23S rRNA. The polypeptide is Large ribosomal subunit protein uL14c (Citrus sinensis (Sweet orange)).